Reading from the N-terminus, the 255-residue chain is Glucanase inhibitor protein 4 (255 aa).

The N-terminal stretch at 1-21 (MKSITTASFALILFGVGAASA) is a signal peptide. The 227-residue stretch at 29–255 (VLGGGAVPSG…ESLGMDQLGH (227 aa)) folds into the Peptidase S1 domain. C56 and C72 are joined by a disulfide. Residues N90, N105, N110, and N160 are each glycosylated (N-linked (GlcNAc...) asparagine). 2 cysteine pairs are disulfide-bonded: C180–C192 and C202–C235.

This sequence belongs to the peptidase S1 family. In terms of assembly, forms an apoplastic complex with host endoglucanases in tomato leaves during P.infestans infection.

The protein localises to the secreted. Its function is as follows. Secreted effector that suppresses host plant glucan elicitor-mediated defense responses. Targets host endoglucanases and inhibits the endoglucanase-mediated release of elicitor-active glucan oligosaccharides from P.infestans cell walls. In Phytophthora infestans (Potato late blight agent), this protein is Glucanase inhibitor protein 4.